We begin with the raw amino-acid sequence, 429 residues long: Glucose-1-phosphate adenylyltransferase (429 aa).

Alpha-D-glucose 1-phosphate-binding positions include G162, 177–178 (EK), and S209.

It belongs to the bacterial/plant glucose-1-phosphate adenylyltransferase family. Homotetramer.

The catalysed reaction is alpha-D-glucose 1-phosphate + ATP + H(+) = ADP-alpha-D-glucose + diphosphate. It functions in the pathway glycan biosynthesis; glycogen biosynthesis. Its function is as follows. Involved in the biosynthesis of ADP-glucose, a building block required for the elongation reactions to produce glycogen. Catalyzes the reaction between ATP and alpha-D-glucose 1-phosphate (G1P) to produce pyrophosphate and ADP-Glc. The sequence is that of Glucose-1-phosphate adenylyltransferase from Picosynechococcus sp. (strain ATCC 27264 / PCC 7002 / PR-6) (Agmenellum quadruplicatum).